Here is a 315-residue protein sequence, read N- to C-terminus: MEKLRIIFMGTPEFAVGILDTIIKNNYDVVGVITAADKPAGRGQKIKYSAVKEYALANNLTLLQPTNLKDESFLAELKALNANLQIVVAFRMLPKVVWEMPNLGTFNLHASLLPNYRGAAPINWAIINGETKTGVTTFFIDDKIDTGAMILNSEIAIEPAENAGQLHDRLMNLGSTTVIDTLKVIENGNVITTIQEDNNDIKTAYKLNKENCKIDWTKSGDEINNLIRGLSPYPAAWCFLKDKNEELSIKIYEAKLLEEAHSYEAGKLISGKKEIKIAIKNGFIQLLSLQLPGKKRMQVAELLNGITFSDEAKVY.

Residue 111 to 114 (SLLP) coordinates (6S)-5,6,7,8-tetrahydrofolate.

Belongs to the Fmt family.

The catalysed reaction is L-methionyl-tRNA(fMet) + (6R)-10-formyltetrahydrofolate = N-formyl-L-methionyl-tRNA(fMet) + (6S)-5,6,7,8-tetrahydrofolate + H(+). Attaches a formyl group to the free amino group of methionyl-tRNA(fMet). The formyl group appears to play a dual role in the initiator identity of N-formylmethionyl-tRNA by promoting its recognition by IF2 and preventing the misappropriation of this tRNA by the elongation apparatus. This is Methionyl-tRNA formyltransferase from Flavobacterium johnsoniae (strain ATCC 17061 / DSM 2064 / JCM 8514 / BCRC 14874 / CCUG 350202 / NBRC 14942 / NCIMB 11054 / UW101) (Cytophaga johnsonae).